The primary structure comprises 499 residues: ATP synthase subunit beta, chloroplastic (499 aa).

170–177 (GGAGVGKT) contacts ATP.

The protein belongs to the ATPase alpha/beta chains family. In terms of assembly, F-type ATPases have 2 components, CF(1) - the catalytic core - and CF(0) - the membrane proton channel. CF(1) has five subunits: alpha(3), beta(3), gamma(1), delta(1), epsilon(1). CF(0) has four main subunits: a(1), b(1), b'(1) and c(9-12).

It is found in the plastid. The protein resides in the chloroplast thylakoid membrane. The enzyme catalyses ATP + H2O + 4 H(+)(in) = ADP + phosphate + 5 H(+)(out). Produces ATP from ADP in the presence of a proton gradient across the membrane. The catalytic sites are hosted primarily by the beta subunits. This chain is ATP synthase subunit beta, chloroplastic, found in Ipomoea purpurea (Common morning glory).